The primary structure comprises 216 residues: Somatotropin (216 aa).

A signal peptide spans 1-26; that stretch reads MAAGPRNSVLLAFALLCLPWPQEVGT. Zn(2+) is bound at residue histidine 45. Residues cysteine 78 and cysteine 189 are joined by a disulfide bond. Serine 131 carries the post-translational modification Phosphoserine. Residue glutamate 198 participates in Zn(2+) binding. A disulfide bond links cysteine 206 and cysteine 214.

Belongs to the somatotropin/prolactin family.

The protein localises to the secreted. Its function is as follows. Plays an important role in growth control. Its major role in stimulating body growth is to stimulate the liver and other tissues to secrete IGF1. It stimulates both the differentiation and proliferation of myoblasts. It also stimulates amino acid uptake and protein synthesis in muscle and other tissues. This is Somatotropin (GH1) from Felis catus (Cat).